Consider the following 176-residue polypeptide: Inorganic pyrophosphatase (176 aa).

Substrate is bound by residues Lys30, Arg44, and Tyr56. 3 residues coordinate Mg(2+): Asp66, Asp71, and Asp103. Tyr142 serves as a coordination point for substrate.

Belongs to the PPase family. Homohexamer. The cofactor is Mg(2+).

It is found in the cytoplasm. The catalysed reaction is diphosphate + H2O = 2 phosphate + H(+). In terms of biological role, catalyzes the hydrolysis of inorganic pyrophosphate (PPi) forming two phosphate ions. The sequence is that of Inorganic pyrophosphatase from Escherichia coli O157:H7.